Here is a 493-residue protein sequence, read N- to C-terminus: Signal recognition particle subunit SRP54 3 (493 aa).

Residues 1-294 (MVLADVGGSI…NVEPFVARLL (294 aa)) are G-domain. GTP contacts are provided by residues 107-114 (GLQGSGKT), 189-193 (DTSGR), and 247-250 (TKLD). An M-domain region spans residues 295–493 (GRGDLPGLID…KMLAGMRGGA (199 aa)).

This sequence belongs to the GTP-binding SRP family. SRP54 subfamily. As to quaternary structure, component of a signal recognition particle (SRP) complex that consists of a 7SL RNA molecule of 300 nucleotides and six protein subunits: SRP72, SRP68, SRP54, SRP19, SRP14 and SRP9.

Its subcellular location is the cytoplasm. It is found in the endoplasmic reticulum. The enzyme catalyses GTP + H2O = GDP + phosphate + H(+). Component of the signal recognition particle (SRP) complex, a ribonucleoprotein complex that mediates the cotranslational targeting of secretory and membrane proteins to the endoplasmic reticulum (ER). As part of the SRP complex, associates with the SRP receptor (SR) component SRPRA to target secretory proteins to the endoplasmic reticulum membrane. Binds to the signal sequence of presecretory proteins when they emerge from the ribosomes. Displays basal GTPase activity, and stimulates reciprocal GTPase activation of the SR subunit SRPRA. Forms a guanosine 5'-triphosphate (GTP)-dependent complex with the SR subunit SRPRA. SR compaction and GTPase mediated rearrangement of SR drive SRP-mediated cotranslational protein translocation into the ER. Requires the presence of SRP9/SRP14 and/or SRP19 to stably interact with RNA. The chain is Signal recognition particle subunit SRP54 3 (SRP54-3) from Hordeum vulgare (Barley).